The following is a 186-amino-acid chain: UPF0397 protein lp_0150 (186 aa).

The next 5 helical transmembrane spans lie at valine 12 to proline 32, glycine 45 to isoleucine 65, glycine 76 to alanine 96, leucine 112 to proline 132, and valine 151 to leucine 171.

The protein belongs to the UPF0397 family.

The protein resides in the cell membrane. This chain is UPF0397 protein lp_0150, found in Lactiplantibacillus plantarum (strain ATCC BAA-793 / NCIMB 8826 / WCFS1) (Lactobacillus plantarum).